The sequence spans 324 residues: Myb-like DNA-binding protein myb-1 (324 aa).

HTH myb-type domains follow at residues 4–59 (MPDQ…KPGL) and 60–110 (NHGP…NRKK). A disordered region spans residues 107–231 (NRKKNQLRRQ…PTGSTLRLLT (125 aa)). The span at 155–165 (RRPSSPSSFND) shows a compositional bias: polar residues. Basic and acidic residues predominate over residues 166–175 (SLHHRVHESI). Composition is skewed to low complexity over residues 183–192 (QQQQQQQQQQ) and 222–231 (PTGSTLRLLT).

It is found in the nucleus. This Neurospora crassa (strain ATCC 24698 / 74-OR23-1A / CBS 708.71 / DSM 1257 / FGSC 987) protein is Myb-like DNA-binding protein myb-1 (rca-1).